The sequence spans 155 residues: uncharacterized protein (155 aa).

In terms of domain architecture, N-acetyltransferase spans 7-154 (LQINYKTLEE…VWLPESVELQ (148 aa)).

This is an uncharacterized protein from Brevibacillus brevis (strain 47 / JCM 6285 / NBRC 100599).